We begin with the raw amino-acid sequence, 798 residues long: Nuclear intron maturase 4, mitochondrial (798 aa).

The N-terminal 16 residues, 1–16, are a transit peptide targeting the mitochondrion; that stretch reads MFRKRNLVLDLLRRCY. The segment at 578–665 is intron maturase type-2; it reads VVAPTNAIGR…AAKYRIHENE (88 aa). The THAP-type zinc-finger motif lies at 729-778; sequence CFVIGCSMAAPAVYTLHAMERQKFPGWKTGFSVCIPSSLNGRRIGLCKQH.

Belongs to the plant nuclear intron maturase (nMat) family.

The protein resides in the mitochondrion. It is found in the plastid. It localises to the chloroplast. Its function is as follows. Nuclear-encoded maturase required for splicing of group-II introns in mitochondria. Involved in NAD1 pre-mRNA processing and maturation of introns 1, 3 and 4. Necessary for mitochondrial biogenesis during early developmental stages. Essential for respiratory holocomplex I biogenesis in mitochondria. The chain is Nuclear intron maturase 4, mitochondrial from Arabidopsis thaliana (Mouse-ear cress).